A 264-amino-acid chain; its full sequence is uncharacterized protein (264 aa).

3 stretches are compositionally biased toward polar residues: residues 1–18, 73–83, and 126–139; these read MFEN…SSRS, SLGSVGTTEVN, and KTTQ…QPVL. Disordered stretches follow at residues 1–47 and 68–264; these read MFEN…WVGS and RKEP…LSFE. A compositionally biased stretch (low complexity) spans 149 to 171; sequence SSGQPQVSSSAQPSPADASQPEA. Residues 194–212 are compositionally biased toward basic and acidic residues; it reads LIHKDGQDDPKLKVTECRR. Residues serine 214, serine 215, serine 241, and serine 250 each carry the phosphoserine modification.

This is an uncharacterized protein from Bos taurus (Bovine).